A 92-amino-acid polypeptide reads, in one-letter code: Probable Fe(2+)-trafficking protein (92 aa).

The protein belongs to the Fe(2+)-trafficking protein family.

Could be a mediator in iron transactions between iron acquisition and iron-requiring processes, such as synthesis and/or repair of Fe-S clusters in biosynthetic enzymes. The chain is Probable Fe(2+)-trafficking protein from Shewanella frigidimarina (strain NCIMB 400).